The chain runs to 1335 residues: Probable serine/threonine-protein kinase ndrC (1335 aa).

Disordered stretches follow at residues 1–70 (MSRK…KKGS), 85–158 (VDTH…LIPS), 276–447 (LPPP…SPLN), and 462–603 (TTTT…NNNK). Residues 8–17 (NRSSSSNSIE) show a composition bias toward polar residues. Residues 27 to 41 (SNISNSSNINCNNSS) show a composition bias toward low complexity. The segment covering 55-70 (RSKHSSPIHSLKKKGS) has biased composition (basic residues). The segment covering 89 to 117 (SSSNSNNNSSSNNNNNNNNHNINSSSESS) has biased composition (low complexity). The span at 118–132 (TPTTPRSSFTPQVTM) shows a compositional bias: polar residues. Residues 133–153 (NSNQSSGNNSPQLSSRSSSQS) show a composition bias toward low complexity. Positions 276–288 (LPPPSQQQLPPPQ) are enriched in pro residues. Low complexity-rich tracts occupy residues 289-331 (SHQQ…TPQS), 345-368 (NQQQ…SPNK), 382-396 (SPSP…SPSS), 412-424 (PTPL…SPSS), 437-447 (PSSFSGGSPLN), and 462-484 (TTTT…TTIS). Polar residues predominate over residues 485–497 (NPNYTQNLPTTPL). The segment covering 498 to 507 (SNSSSNNNNN) has biased composition (low complexity). The span at 508 to 528 (GSFITLQDTTNNKSIINNNRE) shows a compositional bias: polar residues. Positions 540–566 (SSGSSNTTSSTTNTTTPSSSSLTTSSG) are enriched in low complexity. Residues 567-581 (KESRDRDSKDKEKDL) show a composition bias toward basic and acidic residues. Over residues 586-602 (NNNNNNNNNNNNNNNNN) the composition is skewed to low complexity. Residues 586-613 (NNNNNNNNNNNNNNNNNKVEKEKENYCK) adopt a coiled-coil conformation. The Protein kinase domain maps to 718–1019 (FKILTQIGKG…KQDFKNHPFF (302 aa)). Residues 724–732 (IGKGGFGQV) and K747 each bind ATP. The Proton acceptor role is filled by D840. The region spanning 1020–1106 (KNHNWDEIVN…RKSSALSLSM (87 aa)) is the AGC-kinase C-terminal domain. Residues 1239–1284 (SQSQPSLANQLQSSSSSPSPSLQSQSQSPSLQSSSKSTPNLSSSLL) show a composition bias toward low complexity. Residues 1239–1313 (SQSQPSLANQ…IKKENESEEI (75 aa)) form a disordered region. Over residues 1287-1313 (PVKEELEYKNQTENEVEIKKENESEEI) the composition is skewed to basic and acidic residues. Residues 1289–1325 (KEELEYKNQTENEVEIKKENESEEIQSLRDQLKEIII) adopt a coiled-coil conformation.

This sequence belongs to the protein kinase superfamily. AGC Ser/Thr protein kinase family.

The enzyme catalyses L-seryl-[protein] + ATP = O-phospho-L-seryl-[protein] + ADP + H(+). It carries out the reaction L-threonyl-[protein] + ATP = O-phospho-L-threonyl-[protein] + ADP + H(+). This is Probable serine/threonine-protein kinase ndrC (ndrC) from Dictyostelium discoideum (Social amoeba).